The primary structure comprises 209 residues: MAKNYFDITLALAGVCQSARLVQQLAHQSQCDEPPLRVSLQSLLDLNPPSVRAVYGDNPANLRMGLETLQNVLNASSREGLGAELTWYTLGLIVLERKLNGNRGAQAELSRRIDALDRQLSHFDLLSDTLISAMASIYVDIISPLGPRIQVTGAPVVLQNTQIQAKVRAVLLAGIRSAVLWQQVGGGRFQLMFARNRLFKKAKQILSHT.

It belongs to the HflD family.

The protein localises to the cytoplasm. The protein resides in the cell inner membrane. This chain is High frequency lysogenization protein HflD homolog, found in Sodalis glossinidius (strain morsitans).